Here is a 368-residue protein sequence, read N- to C-terminus: Histidinol-phosphate aminotransferase (368 aa).

The residue at position 226 (K226) is an N6-(pyridoxal phosphate)lysine.

Belongs to the class-II pyridoxal-phosphate-dependent aminotransferase family. Histidinol-phosphate aminotransferase subfamily. In terms of assembly, homodimer. Pyridoxal 5'-phosphate serves as cofactor.

The catalysed reaction is L-histidinol phosphate + 2-oxoglutarate = 3-(imidazol-4-yl)-2-oxopropyl phosphate + L-glutamate. Its pathway is amino-acid biosynthesis; L-histidine biosynthesis; L-histidine from 5-phospho-alpha-D-ribose 1-diphosphate: step 7/9. The chain is Histidinol-phosphate aminotransferase from Colwellia psychrerythraea (strain 34H / ATCC BAA-681) (Vibrio psychroerythus).